The chain runs to 603 residues: MNHFPKLLSSQIGFDVAQTILENFDRHYRIFREAAVEAKDLFERADWHGLQRLARERITSYDDRVRECVELLEDEYDAENIDNEVWPQIKLHYIGLLTSHRQPECAETFFNSVCCKILHRAYFNNDFIFVRPAISTEYIENDEPAAKPTYRAYYPGSEGLAATLERIVTNFQLNPPFEDLERDIACIMQAIHDEFGAFDEAVNFQIHVLSSLFYRNKTAYVVGRIINGDRVLPFAVPIRHARAGILALDTVLLRRDQLKIIFSFSHSYFLVDMNVPSAYVQFLRSIMPGKPKAEIYTSVGLQKQGKNLFYRDLLHHLSHSSDRFIVAPGIKGLVMLVFTLPSFPYVFKMIKDHFPPPKDTTREQIMAKYLLVKRHDRLGRMADTLEYSSVALPLARLDDALVRELEKEVPSLIEYEGENLVIKHLYIERRMVPLNLYLQNGSDAEIEHGVREYGNAVKELMQANIFPGDMLYKNFGVTRHGRVVFYDYDEIEYLTDCNVRRVPPPRNDEDEMSGEPWYTVGPHDIFPETYAPFLLGDPRVREHFLAHHADFFDPQLWQDSKDRLLRGELPDFFAYEPALRFCIRYPERFAPGDAADGGKLAAA.

ATP contacts are provided by residues 327–333 (APGIKGL) and Lys348. Asp383 is a catalytic residue.

This sequence belongs to the AceK family.

Its subcellular location is the cytoplasm. The enzyme catalyses L-seryl-[isocitrate dehydrogenase] + ATP = O-phospho-L-seryl-[isocitrate dehydrogenase] + ADP + H(+). Bifunctional enzyme which can phosphorylate or dephosphorylate isocitrate dehydrogenase (IDH) on a specific serine residue. This is a regulatory mechanism which enables bacteria to bypass the Krebs cycle via the glyoxylate shunt in response to the source of carbon. When bacteria are grown on glucose, IDH is fully active and unphosphorylated, but when grown on acetate or ethanol, the activity of IDH declines drastically concomitant with its phosphorylation. In Burkholderia mallei (strain ATCC 23344), this protein is Isocitrate dehydrogenase kinase/phosphatase.